The chain runs to 320 residues: N-acetylneuraminate lyase (320 aa).

Residues T51 and T52 each contribute to the aceneuramate site. Y143 serves as the catalytic Proton donor. K173 acts as the Schiff-base intermediate with substrate in catalysis. 5 residues coordinate aceneuramate: S175, G199, D201, E202, and S218.

It belongs to the DapA family. NanA subfamily. As to quaternary structure, homotetramer.

It localises to the cytoplasm. The catalysed reaction is aceneuramate = aldehydo-N-acetyl-D-mannosamine + pyruvate. Its pathway is amino-sugar metabolism; N-acetylneuraminate degradation. Its function is as follows. Catalyzes the cleavage of N-acetylneuraminic acid (sialic acid) to form pyruvate and N-acetylmannosamine via a Schiff base intermediate. It prevents sialic acids from being recycled and returning to the cell surface. Involved in the N-glycolylneuraminic acid (Neu5Gc) degradation pathway. This is N-acetylneuraminate lyase from Pongo abelii (Sumatran orangutan).